Here is a 285-residue protein sequence, read N- to C-terminus: 4-diphosphocytidyl-2-C-methyl-D-erythritol kinase (285 aa).

Residue lysine 10 is part of the active site. 92–102 (PFGAGLGGGSS) is a binding site for ATP. Aspartate 134 is a catalytic residue.

It belongs to the GHMP kinase family. IspE subfamily.

It catalyses the reaction 4-CDP-2-C-methyl-D-erythritol + ATP = 4-CDP-2-C-methyl-D-erythritol 2-phosphate + ADP + H(+). The protein operates within isoprenoid biosynthesis; isopentenyl diphosphate biosynthesis via DXP pathway; isopentenyl diphosphate from 1-deoxy-D-xylulose 5-phosphate: step 3/6. In terms of biological role, catalyzes the phosphorylation of the position 2 hydroxy group of 4-diphosphocytidyl-2C-methyl-D-erythritol. The polypeptide is 4-diphosphocytidyl-2-C-methyl-D-erythritol kinase (Chloroherpeton thalassium (strain ATCC 35110 / GB-78)).